Reading from the N-terminus, the 633-residue chain is Probable extracellular metalloproteinase 5 (633 aa).

The N-terminal stretch at Met-1–Ala-20 is a signal peptide. Residues His-21–His-244 constitute a propeptide that is removed on maturation. An N-linked (GlcNAc...) asparagine glycan is attached at Asn-285. Zn(2+) is bound at residue His-428. The active site involves Glu-429. Residue His-432 participates in Zn(2+) binding. Asn-592 and Asn-621 each carry an N-linked (GlcNAc...) asparagine glycan.

The protein belongs to the peptidase M36 family. Zn(2+) serves as cofactor.

It is found in the secreted. Functionally, secreted metalloproteinase probably acting as a virulence factor. This Trichophyton verrucosum (strain HKI 0517) protein is Probable extracellular metalloproteinase 5 (MEP5).